The sequence spans 214 residues: Adenylate kinase (214 aa).

Residue 11–16 (GTGKGT) coordinates ATP. The tract at residues 31 to 61 (SSGDLFRFYAKEEKTALAEEIKSYINNGLYV) is NMP. AMP-binding positions include Ser32, Arg37, 59–61 (LYV), 87–90 (GYPR), and Gln94. The tract at residues 124–163 (LRRSCPQCKRIYNINSVDFKPKVANLCDLCKVELIHRKDD) is LID. Arg125 contacts ATP. Positions 128 and 131 each coordinate Zn(2+). 134–135 (IY) is a binding site for ATP. The Zn(2+) site is built by Cys150 and Cys153. AMP contacts are provided by Arg160 and Arg171. Lys199 serves as a coordination point for ATP.

The protein belongs to the adenylate kinase family. As to quaternary structure, monomer.

Its subcellular location is the cytoplasm. It catalyses the reaction AMP + ATP = 2 ADP. Its pathway is purine metabolism; AMP biosynthesis via salvage pathway; AMP from ADP: step 1/1. Catalyzes the reversible transfer of the terminal phosphate group between ATP and AMP. Plays an important role in cellular energy homeostasis and in adenine nucleotide metabolism. The chain is Adenylate kinase from Mycoplasmoides gallisepticum (strain R(low / passage 15 / clone 2)) (Mycoplasma gallisepticum).